Here is a 200-residue protein sequence, read N- to C-terminus: Lipopolysaccharide core heptose(II)-phosphate phosphatase (200 aa).

The signal sequence occupies residues M1–A25.

It belongs to the phosphoglycerate mutase family. Ais subfamily.

Its subcellular location is the periplasm. It functions in the pathway bacterial outer membrane biogenesis; lipopolysaccharide metabolism. In terms of biological role, catalyzes the dephosphorylation of heptose(II) of the outer membrane lipopolysaccharide core. This Escherichia coli O6:K15:H31 (strain 536 / UPEC) protein is Lipopolysaccharide core heptose(II)-phosphate phosphatase.